Here is a 176-residue protein sequence, read N- to C-terminus: Transcription termination/antitermination protein NusG (176 aa).

The 25-residue stretch at 125-149 folds into the KOW domain; it reads GEVVRVVEGPFANFTATVEEYDVEH.

The protein belongs to the NusG family.

Functionally, participates in transcription elongation, termination and antitermination. This Helicobacter pylori (strain J99 / ATCC 700824) (Campylobacter pylori J99) protein is Transcription termination/antitermination protein NusG.